A 446-amino-acid chain; its full sequence is MGKFFGTDGVRGVANEGLTPELAFKLGRFGGYVLTKDSERPRILIGRDTRVSGHMLEGALLAGLLSIGAEVMRLGVISTPGVAYLTKATSAQAGVMISASHNPVEDNGIKFFGPDGFKLTDAQENEIESLMEGEDNLPRPTGADIGVVNDYFEGGQKYLSYLKDTIDNDFEGIHIAIDCANGATSSLATHLFADLEADIYSIGSSPDGLNINDGFGSTHPEKLQEFVVEKNADIGLAFDGDGDRLIAVDEKGNLVDGDKIMFICAKYMHEIGMLRKDTVVSTVMSNLGFYKALENIGLNSNKTSVGDRYVMEEMRQNGYNLGGEQSGHIIFLDYITTGDGMLSAIQLVNVMRETGKPLSELADEMVVFPQVLKNVRVMDKNQALSSSVLLDEVDAVEKELGEDGRVLVRPSGTEPLVRVMVEAKTKEECEQYADRIVSVIEQHLGA.

Ser-100 functions as the Phosphoserine intermediate in the catalytic mechanism. 4 residues coordinate Mg(2+): Ser-100, Asp-239, Asp-241, and Asp-243. A Phosphoserine modification is found at Ser-100.

The protein belongs to the phosphohexose mutase family. Mg(2+) serves as cofactor. Activated by phosphorylation.

It catalyses the reaction alpha-D-glucosamine 1-phosphate = D-glucosamine 6-phosphate. Its function is as follows. Catalyzes the conversion of glucosamine-6-phosphate to glucosamine-1-phosphate. In Oceanobacillus iheyensis (strain DSM 14371 / CIP 107618 / JCM 11309 / KCTC 3954 / HTE831), this protein is Phosphoglucosamine mutase.